We begin with the raw amino-acid sequence, 216 residues long: Thymidylate kinase (216 aa).

10–17 serves as a coordination point for ATP; the sequence is GVDGSGKT.

The protein belongs to the thymidylate kinase family.

The enzyme catalyses dTMP + ATP = dTDP + ADP. In terms of biological role, phosphorylation of dTMP to form dTDP in both de novo and salvage pathways of dTTP synthesis. The chain is Thymidylate kinase from Pelotomaculum thermopropionicum (strain DSM 13744 / JCM 10971 / SI).